We begin with the raw amino-acid sequence, 341 residues long: Beta-ketoacyl-[acyl-carrier-protein] synthase III 1 (341 aa).

Catalysis depends on residues Cys-113 and His-249. The tract at residues 250–254 (QANIR) is ACP-binding. Asn-279 is an active-site residue.

It belongs to the thiolase-like superfamily. FabH family. Homodimer.

The protein resides in the cytoplasm. It catalyses the reaction malonyl-[ACP] + acetyl-CoA + H(+) = 3-oxobutanoyl-[ACP] + CO2 + CoA. Its pathway is lipid metabolism; fatty acid biosynthesis. Its function is as follows. Catalyzes the condensation reaction of fatty acid synthesis by the addition to an acyl acceptor of two carbons from malonyl-ACP. Catalyzes the first condensation reaction which initiates fatty acid synthesis and may therefore play a role in governing the total rate of fatty acid production. Possesses both acetoacetyl-ACP synthase and acetyl transacylase activities. Its substrate specificity determines the biosynthesis of branched-chain and/or straight-chain of fatty acids. In Deinococcus radiodurans (strain ATCC 13939 / DSM 20539 / JCM 16871 / CCUG 27074 / LMG 4051 / NBRC 15346 / NCIMB 9279 / VKM B-1422 / R1), this protein is Beta-ketoacyl-[acyl-carrier-protein] synthase III 1.